The primary structure comprises 197 residues: Shikimate kinase (197 aa).

Residue 15–20 (GSGKSS) participates in ATP binding. S19 provides a ligand contact to Mg(2+). Residues D37, R61, and G83 each contribute to the substrate site. Position 121 (R121) interacts with ATP. R148 contributes to the substrate binding site.

The protein belongs to the shikimate kinase family. In terms of assembly, monomer. Mg(2+) is required as a cofactor.

The protein resides in the cytoplasm. It catalyses the reaction shikimate + ATP = 3-phosphoshikimate + ADP + H(+). It functions in the pathway metabolic intermediate biosynthesis; chorismate biosynthesis; chorismate from D-erythrose 4-phosphate and phosphoenolpyruvate: step 5/7. Catalyzes the specific phosphorylation of the 3-hydroxyl group of shikimic acid using ATP as a cosubstrate. This chain is Shikimate kinase, found in Chlorobium phaeovibrioides (strain DSM 265 / 1930) (Prosthecochloris vibrioformis (strain DSM 265)).